The chain runs to 255 residues: Probable transcriptional regulatory protein CMS0715 (255 aa).

It belongs to the TACO1 family.

It is found in the cytoplasm. This Clavibacter sepedonicus (Clavibacter michiganensis subsp. sepedonicus) protein is Probable transcriptional regulatory protein CMS0715.